A 173-amino-acid chain; its full sequence is Archaemetzincin (173 aa).

A Zn(2+)-binding site is contributed by histidine 130. Glutamate 131 acts as the Proton acceptor in catalysis. 6 residues coordinate Zn(2+): histidine 134, histidine 140, cysteine 141, cysteine 146, cysteine 165, and cysteine 168.

The protein belongs to the peptidase M54 family. As to quaternary structure, monomer. Zn(2+) is required as a cofactor.

Functionally, probable zinc metalloprotease whose natural substrate is unknown. The chain is Archaemetzincin from Natronomonas pharaonis (strain ATCC 35678 / DSM 2160 / CIP 103997 / JCM 8858 / NBRC 14720 / NCIMB 2260 / Gabara) (Halobacterium pharaonis).